The chain runs to 967 residues: Probable disease resistance protein At1g61190 (967 aa).

The stretch at 20-68 forms a coiled coil; it reads RCLCGKGYIRNLEKNLRALQREMEDLRATQHEVQNKVAREESRHQQRLE. Residues 132–153 are disordered; it reads GNFDEVSQPPPRSEVEERPTQP. In terms of domain architecture, NB-ARC spans 138–441; it reads SQPPPRSEVE…CEGFIGEDQV (304 aa). 180–187 serves as a coordination point for ATP; sequence GMGGVGKT. LRR repeat units lie at residues 516 to 537, 538 to 559, 562 to 585, 586 to 608, and 609 to 631; these read AVRR…SKCS, ELTT…FIRY, KLVV…SGLV, SLQY…KELK, and KLIF…SRLL.

Belongs to the disease resistance NB-LRR family.

In terms of biological role, probable disease resistance protein. The chain is Probable disease resistance protein At1g61190 from Arabidopsis thaliana (Mouse-ear cress).